Here is a 379-residue protein sequence, read N- to C-terminus: Dual-specificity RNA methyltransferase RlmN (379 aa).

Glu-90 serves as the catalytic Proton acceptor. The region spanning 96 to 348 (EPNRGTLCVS…TTVRKTRGDD (253 aa)) is the Radical SAM core domain. The cysteines at positions 103 and 353 are disulfide-linked. Residues Cys-110, Cys-114, and Cys-117 each contribute to the [4Fe-4S] cluster site. S-adenosyl-L-methionine contacts are provided by residues 179–180 (GE), Ser-211, 233–235 (SLH), and Asn-310. Cys-353 serves as the catalytic S-methylcysteine intermediate.

It belongs to the radical SAM superfamily. RlmN family. [4Fe-4S] cluster is required as a cofactor.

It localises to the cytoplasm. The enzyme catalyses adenosine(2503) in 23S rRNA + 2 reduced [2Fe-2S]-[ferredoxin] + 2 S-adenosyl-L-methionine = 2-methyladenosine(2503) in 23S rRNA + 5'-deoxyadenosine + L-methionine + 2 oxidized [2Fe-2S]-[ferredoxin] + S-adenosyl-L-homocysteine. It carries out the reaction adenosine(37) in tRNA + 2 reduced [2Fe-2S]-[ferredoxin] + 2 S-adenosyl-L-methionine = 2-methyladenosine(37) in tRNA + 5'-deoxyadenosine + L-methionine + 2 oxidized [2Fe-2S]-[ferredoxin] + S-adenosyl-L-homocysteine. Specifically methylates position 2 of adenine 2503 in 23S rRNA and position 2 of adenine 37 in tRNAs. m2A2503 modification seems to play a crucial role in the proofreading step occurring at the peptidyl transferase center and thus would serve to optimize ribosomal fidelity. This chain is Dual-specificity RNA methyltransferase RlmN, found in Nitrosomonas eutropha (strain DSM 101675 / C91 / Nm57).